The chain runs to 40 residues: MNIAISFTQAFCTHDEDCLEGQCCVQRICIDCNVLKLHRM.

This is an uncharacterized protein from Acheta domesticus (House cricket).